Consider the following 88-residue polypeptide: UPF0298 protein BA_4142/GBAA_4142/BAS3844 (88 aa).

Belongs to the UPF0298 family.

It is found in the cytoplasm. This chain is UPF0298 protein BA_4142/GBAA_4142/BAS3844, found in Bacillus anthracis.